The chain runs to 352 residues: Beta-methylmalyl-CoA dehydratase (352 aa).

The MaoC-like domain maps to 16-129; it reads LGQTIVHATP…GKTGVVYVHS (114 aa). Residues 62 to 65, 85 to 88, and 96 to 98 contribute to the substrate site; these read PIDS, IANL, and GAV.

As to quaternary structure, homodimer.

The enzyme catalyses (2R,3S)-beta-methylmalyl-CoA = 2-methylfumaryl-CoA + H2O. In terms of biological role, involved in the glyoxylate assimilation cycle used to regenerate acetyl-CoA and produce pyruvate as universal precursor for biosynthesis. Catalyzes the reversible dehydration of beta-methylmalyl-CoA ((2R,3S)-beta-methylmalyl-CoA) to yield mesaconyl-CoA (2-methylfumaryl-CoA). This is Beta-methylmalyl-CoA dehydratase (mch) from Chloroflexus aurantiacus (strain ATCC 29366 / DSM 635 / J-10-fl).